Here is a 547-residue protein sequence, read N- to C-terminus: Smu-2 suppressor of mec-8 and unc-52 protein (547 aa).

Disordered regions lie at residues threonine 18–glutamine 125, isoleucine 164–leucine 202, alanine 288–lysine 459, asparagine 496–leucine 515, and lysine 524–tyrosine 547. The span at alanine 34–alanine 44 shows a compositional bias: basic and acidic residues. Over residues serine 45 to lysine 58 the composition is skewed to basic residues. A coiled-coil region spans residues lysine 66 to glutamate 94. The span at asparagine 87–serine 106 shows a compositional bias: basic and acidic residues. The tract at residues glutamate 163–glutamate 223 is required and sufficient for interaction with smu-1. Positions lysine 166–alanine 178 are enriched in acidic residues. Composition is skewed to low complexity over residues serine 185–serine 196 and alanine 307–alanine 317. Positions valine 330 to glutamate 423 are enriched in basic and acidic residues. 12 repeat units span residues arginine 336 to aspartate 337, arginine 339 to aspartate 340, arginine 348 to aspartate 349, arginine 350 to serine 351, arginine 352 to aspartate 353, arginine 354 to serine 355, arginine 356 to aspartate 357, arginine 358 to aspartate 359, arginine 360 to aspartate 361, arginine 362 to aspartate 363, arginine 364 to aspartate 365, and arginine 367 to aspartate 368. The 12 X 2 AA repeats of R-[DS] stretch occupies residues arginine 336–aspartate 368. Residues phenylalanine 371–glycine 427 are a coiled coil.

It belongs to the RED family. In terms of assembly, probable component of the spliceosome. Heterotetramer with smu-1. The smu-1 homodimer interacts (via the N-terminal region including the LisH and CTLH domains) with smu-2, giving rise to a heterotetramer. As to expression, ubiquitous.

Its subcellular location is the nucleus. Its function is as follows. Auxiliary spliceosomal protein that regulates selection of alternative splice sites in a small set of target pre-mRNA species. Selectively regulates alternative splicing of unc-52 exon 17. Thus, smu-2 mutants selectively suppress the effects of unc-52 nonsense mutations in exon 17 by promoting the accumulation of unc-52 isoforms that lack exon 17. In contrast, smu-2 mutants do not suppress the effects of an unc-52 mutation that affects the 5' splice site of exon 16. Required for normal accumulation of smu-1. This is Smu-2 suppressor of mec-8 and unc-52 protein from Caenorhabditis elegans.